We begin with the raw amino-acid sequence, 249 residues long: Low affinity immunoglobulin gamma Fc region receptor III-A (249 aa).

Positions 1 to 16 (MWQLLPSTALLLVASA) are cleaved as a signal peptide. The Extracellular portion of the chain corresponds to 17–198 (RPQAADLPKA…IQGPPVPSTS (182 aa)). 2 Ig-like C2-type domains span residues 24–104 (PKAV…LEVH) and 119–172 (EGEP…YFCR). 2 cysteine pairs are disulfide-bonded: C47-C88 and C127-C171. Residues N55, N63, N166, and N179 are each glycosylated (N-linked (GlcNAc...) asparagine). Residues 199 to 219 (ALLPFWPHIPFAVVMALLFAV) form a helical membrane-spanning segment. The Cytoplasmic segment spans residues 220 to 249 (DTGLYFAMQRHLHNSKRAWENSKVSWKQDP).

As to quaternary structure, forms a heterooligomeric complex with ITAM-containing signaling subunits FCER1G. Interacts (via transmembrane domain) with signaling subunits; this interaction is a prerequisite for receptor complex expression on the cell surface and intracellular signal transduction. Binds the Fc region of antigen-complexed IgG.

Its subcellular location is the cell membrane. Functionally, receptor for the invariable Fc fragment of immunoglobulin gamma (IgG). Optimally activated upon binding of clustered antigen-IgG complexes displayed on cell surfaces, triggers lysis of antibody-coated cells, a process known as antibody-dependent cellular cytotoxicity (ADCC). Does not bind free monomeric IgG, thus avoiding inappropriate effector cell activation in the absence of antigenic trigger. Mediates IgG effector functions on natural killer (NK) cells. Binds antigen-IgG complexes generated upon infection and triggers NK cell-dependent cytokine production and degranulation to limit viral load and propagation. Fc-binding subunit that associates with FCER1G adapter to form functional signaling complexes. Following the engagement of antigen-IgG complexes, triggers phosphorylation of immunoreceptor tyrosine-based activation motif (ITAM)-containing adapter with subsequent activation of phosphatidylinositol 3-kinase signaling and sustained elevation of intracellular calcium that ultimately drive NK cell activation. Mediates enhanced ADCC in response to afucosylated IgGs. This Mustela putorius furo (European domestic ferret) protein is Low affinity immunoglobulin gamma Fc region receptor III-A.